We begin with the raw amino-acid sequence, 138 residues long: Small ribosomal subunit protein uS11c (138 aa).

The disordered stretch occupies residues 1–23; it reads MAKPIQRIGSRRNGPIGSRKNGR.

This sequence belongs to the universal ribosomal protein uS11 family. In terms of assembly, part of the 30S ribosomal subunit.

Its subcellular location is the plastid. The protein localises to the chloroplast. The chain is Small ribosomal subunit protein uS11c from Platanus occidentalis (Sycamore).